The following is a 436-amino-acid chain: MNAPDSPNALAARSELTDLMQRMGSGAKVASAHMARASAAVKNWALSKLATLLRQNVKALDNANQRDLARAQAAGLAGPLLDRLRLSPKDIETVALGCEQLAAMPDVIGEIIGMKEQPSGIRVGQMRVPIGVFGMIYESRPNVTIEAASLAIKSGNACILRGGSEAIESNKALASLVQQALLDAGLPADAVQLVPTTDREAVGLLIAMPQYVDVIIPRGGKGLIERISREAKVPVIKHLDGNCHVYVDDPCDIDMAVRVADNAKTQKYSPCNASEGLLVARGVAAGFLPKIGAVYAAKGVEMRCDAEARALLAGVAGANLQPVSEQDWYEEYLAPIISIKVVAGIDEAIAHINQYSSHHTDAILTRDHMHAQRFLREVDSASVMVNASTRFADGFEFGLGAEIGISTDKFHARGPVGIEGLTSLKYVVLGNGEVRT.

It belongs to the gamma-glutamyl phosphate reductase family.

The protein resides in the cytoplasm. It carries out the reaction L-glutamate 5-semialdehyde + phosphate + NADP(+) = L-glutamyl 5-phosphate + NADPH + H(+). Its pathway is amino-acid biosynthesis; L-proline biosynthesis; L-glutamate 5-semialdehyde from L-glutamate: step 2/2. In terms of biological role, catalyzes the NADPH-dependent reduction of L-glutamate 5-phosphate into L-glutamate 5-semialdehyde and phosphate. The product spontaneously undergoes cyclization to form 1-pyrroline-5-carboxylate. This is Gamma-glutamyl phosphate reductase from Polaromonas sp. (strain JS666 / ATCC BAA-500).